The following is a 65-amino-acid chain: Prokaryotic ubiquitin-like protein Pup (65 aa).

A compositionally biased stretch (basic and acidic residues) spans 1–13 (MAQEQKQPRKSSE). Residues 1-34 (MAQEQKQPRKSSEADEAVEAVAETDVSERKEALD) are disordered. Positions 21–59 (VAETDVSERKEALDSDVDDILDEIDDVLETNAEDFVKSF) are ARC ATPase binding. The stretch at 25–49 (DVSERKEALDSDVDDILDEIDDVLE) forms a coiled coil. Residue Glu65 forms an Isoglutamyl lysine isopeptide (Glu-Lys) (interchain with K-? in acceptor proteins) linkage.

This sequence belongs to the prokaryotic ubiquitin-like protein family. As to quaternary structure, strongly interacts with the proteasome-associated ATPase ARC through a hydrophobic interface; the interacting region of Pup lies in its C-terminal half. There is one Pup binding site per ARC hexamer ring.

It functions in the pathway protein degradation; proteasomal Pup-dependent pathway. Functionally, protein modifier that is covalently attached to lysine residues of substrate proteins, thereby targeting them for proteasomal degradation. The tagging system is termed pupylation. The protein is Prokaryotic ubiquitin-like protein Pup of Nocardioides sp. (strain ATCC BAA-499 / JS614).